A 144-amino-acid chain; its full sequence is Large ribosomal subunit protein uL15 (144 aa).

The interval 1-53 (MRLNTLSPAEGSKHASKRLGRGIGSGLGKTGGRGHKGQKSRSGGGVRRGFEGG) is disordered. Positions 21–31 (RGIGSGLGKTG) are enriched in gly residues.

The protein belongs to the universal ribosomal protein uL15 family. In terms of assembly, part of the 50S ribosomal subunit.

Functionally, binds to the 23S rRNA. The protein is Large ribosomal subunit protein uL15 of Edwardsiella ictaluri (strain 93-146).